A 446-amino-acid polypeptide reads, in one-letter code: Mannosyltransferase KTR6 (446 aa).

Residues 1–8 are Cytoplasmic-facing; it reads MHVLLSKK. Residues 9-29 traverse the membrane as a helical; Signal-anchor for type II membrane protein segment; sequence IARFLLISFVFVLALMVTINH. The stem region stretch occupies residues 30-114; the sequence is PKTKQMSEQY…MVPSYINHRG (85 aa). The Lumenal portion of the chain corresponds to 30–446; the sequence is PKTKQMSEQY…DKPEGWDRLP (417 aa). Asn-82 and Asn-98 each carry an N-linked (GlcNAc...) asparagine glycan. The segment at 115-446 is catalytic; the sequence is SPPKACFVSL…DKPEGWDRLP (332 aa). Glu-334 serves as the catalytic Nucleophile.

It belongs to the glycosyltransferase 15 family.

It localises to the membrane. Its pathway is protein modification; protein glycosylation. Glycosyltransferase that transfers an alpha-D-mannosyl residue from GDP-mannose into lipid-linked oligosaccharide, forming an alpha-(1-&gt;2)-D-mannosyl-D-mannose linkage. Required for addition of mannosylphosphate in yeast mannan. Recognizes any oligosaccharides with at least one alpha-1,2-linked mannobiose unit. This chain is Mannosyltransferase KTR6 (KTR6), found in Saccharomyces cerevisiae (strain ATCC 204508 / S288c) (Baker's yeast).